The following is a 593-amino-acid chain: Eukaryotic peptide chain release factor subunit 1 (593 aa).

The protein belongs to the eukaryotic release factor 1 family. As to quaternary structure, heterodimer of two subunits, one of which binds GTP.

It is found in the cytoplasm. Its function is as follows. Directs the termination of nascent peptide synthesis (translation) in response to the termination codons UAA, UAG and UGA. The sequence is that of Eukaryotic peptide chain release factor subunit 1 from Caenorhabditis elegans.